The chain runs to 433 residues: Serine--tRNA ligase (433 aa).

235-237 (TSE) is a binding site for L-serine. Position 266-268 (266-268 (RSE)) interacts with ATP. Glu289 serves as a coordination point for L-serine. 353-356 (EISS) contacts ATP. Ser388 contacts L-serine.

Belongs to the class-II aminoacyl-tRNA synthetase family. Type-1 seryl-tRNA synthetase subfamily. Homodimer. The tRNA molecule binds across the dimer.

The protein localises to the cytoplasm. The enzyme catalyses tRNA(Ser) + L-serine + ATP = L-seryl-tRNA(Ser) + AMP + diphosphate + H(+). The catalysed reaction is tRNA(Sec) + L-serine + ATP = L-seryl-tRNA(Sec) + AMP + diphosphate + H(+). Its pathway is aminoacyl-tRNA biosynthesis; selenocysteinyl-tRNA(Sec) biosynthesis; L-seryl-tRNA(Sec) from L-serine and tRNA(Sec): step 1/1. Catalyzes the attachment of serine to tRNA(Ser). Is also able to aminoacylate tRNA(Sec) with serine, to form the misacylated tRNA L-seryl-tRNA(Sec), which will be further converted into selenocysteinyl-tRNA(Sec). The polypeptide is Serine--tRNA ligase (Burkholderia cenocepacia (strain HI2424)).